The sequence spans 485 residues: Glutamate--tRNA ligase (485 aa).

The short motif at 11–21 (PSPTGHLHIGN) is the 'HIGH' region element. Positions 252–256 (KLSKR) match the 'KMSKS' region motif. Position 255 (Lys-255) interacts with ATP.

It belongs to the class-I aminoacyl-tRNA synthetase family. Glutamate--tRNA ligase type 1 subfamily. Monomer.

Its subcellular location is the cytoplasm. It catalyses the reaction tRNA(Glu) + L-glutamate + ATP = L-glutamyl-tRNA(Glu) + AMP + diphosphate. In terms of biological role, catalyzes the attachment of glutamate to tRNA(Glu) in a two-step reaction: glutamate is first activated by ATP to form Glu-AMP and then transferred to the acceptor end of tRNA(Glu). The protein is Glutamate--tRNA ligase of Bacillus mycoides (strain KBAB4) (Bacillus weihenstephanensis).